The following is a 615-amino-acid chain: Sodium-dependent neutral amino acid transporter B(0)AT3 (615 aa).

Topologically, residues Met1–Tyr26 are cytoplasmic. The chain crosses the membrane as a helical span at residues Leu27–Cys47. Over Gln48–Gly52 the chain is Extracellular. A helical membrane pass occupies residues Gly53–Ile73. Topologically, residues Glu74–Ser105 are cytoplasmic. A helical membrane pass occupies residues Val106–Leu126. Topologically, residues Asn127 to Thr177 are extracellular. 2 N-linked (GlcNAc...) asparagine glycosylation sites follow: Asn143 and Asn167. Residues Ile178–Ile198 traverse the membrane as a helical segment. At Arg199–Lys206 the chain is on the cytoplasmic side. Residues Val207–Leu227 traverse the membrane as a helical segment. Over Thr228–Asp255 the chain is Extracellular. A helical membrane pass occupies residues Ala256–Ser276. At Tyr277–Ala288 the chain is on the cytoplasmic side. A helical transmembrane segment spans residues Val289–Val309. Topologically, residues Met310 to Gly397 are extracellular. A glycan (N-linked (GlcNAc...) asparagine) is linked at Asn353. Residues Ala398–Phe418 form a helical membrane-spanning segment. At Gly419 to Glu441 the chain is on the cytoplasmic side. A helical transmembrane segment spans residues Val442–Ser462. The Extracellular segment spans residues Gly463–Ser472. A helical transmembrane segment spans residues Phe473–Ile493. The Cytoplasmic portion of the chain corresponds to Tyr494–Arg520. The helical transmembrane segment at Val521–Thr541 threads the bilayer. Over Pro542–Thr570 the chain is Extracellular. A helical transmembrane segment spans residues Cys571–Leu591. The Cytoplasmic segment spans residues Ser592–Cys615.

Belongs to the sodium:neurotransmitter symporter (SNF) (TC 2.A.22) family. SLC6A18 subfamily. In terms of assembly, interacts with CLTRN; this interaction regulates the trafficking of SLC6A18 to the cell membrane and its activity. In terms of tissue distribution, expressed predominantly in kidney.

The protein localises to the apical cell membrane. It is found in the cell membrane. The catalysed reaction is L-alanine(out) + chloride(out) + 2 Na(+)(out) = L-alanine(in) + chloride(in) + 2 Na(+)(in). The enzyme catalyses glycine(out) + chloride(out) + 2 Na(+)(out) = glycine(in) + chloride(in) + 2 Na(+)(in). It carries out the reaction L-methionine(out) + chloride(out) + 2 Na(+)(out) = L-methionine(in) + chloride(in) + 2 Na(+)(in). It catalyses the reaction L-valine(out) + chloride(out) + 2 Na(+)(out) = L-valine(in) + chloride(in) + 2 Na(+)(in). The catalysed reaction is L-isoleucine(out) + chloride(out) + 2 Na(+)(out) = L-isoleucine(in) + chloride(in) + 2 Na(+)(in). The enzyme catalyses L-serine(out) + chloride(out) + 2 Na(+)(out) = L-serine(in) + chloride(in) + 2 Na(+)(in). It carries out the reaction L-leucine(out) + chloride(out) + 2 Na(+)(out) = L-leucine(in) + chloride(in) + 2 Na(+)(in). Symporter that transports one amino acid molecule together with two sodium and one chloride ions in kidneys and plays a role in the neutral amino acids reabsorption. Preferentially transports neutral amino acids such as L-glycine and L-alanine but also other neutral amino acids. Required CLTRN for cell surface expression and for its amino acid transporter activity. The transport mechanism is pH-independent. The chain is Sodium-dependent neutral amino acid transporter B(0)AT3 from Mus musculus (Mouse).